The primary structure comprises 808 residues: N-terminal kinase-like protein (808 aa).

In terms of domain architecture, Protein kinase spans Phe-14–Leu-314. HEAT repeat units lie at residues Ile-350–Gln-388, Ile-389–Glu-427, and Ile-507–Thr-545. Disordered stretches follow at residues Val-540 to Ala-566, Ser-587 to Asp-646, and Ser-658 to Asp-808. The segment covering Ala-556–Ala-566 has biased composition (low complexity). Residues Ser-587–Gln-600 are compositionally biased toward polar residues. Over residues Arg-601 to Ala-617 the composition is skewed to pro residues. A compositionally biased stretch (polar residues) spans Leu-660–Asn-680. The span at Ser-681–Glu-690 shows a compositional bias: basic and acidic residues. Ser-754 is modified (phosphoserine). The segment covering Trp-755–Glu-764 has biased composition (acidic residues). The stretch at Glu-761–Lys-797 forms a coiled coil. Composition is skewed to basic and acidic residues over residues Thr-765 to Ala-775 and Arg-782 to Val-795. Residues Arg-793 to Asp-808 form an interaction with COPB1 region.

Belongs to the protein kinase superfamily. Interacts with GORAB. Interacts with COPA, COPB1 and COPB2. Homooligomer. Interacts with AP2B1. As to expression, ubiquitous.

The protein resides in the cytoplasm. The protein localises to the cytoskeleton. It localises to the microtubule organizing center. Its subcellular location is the centrosome. It is found in the endoplasmic reticulum-Golgi intermediate compartment. The protein resides in the golgi apparatus. The protein localises to the cis-Golgi network. It localises to the nucleus. Its function is as follows. Regulates COPI-mediated retrograde protein traffic at the interface between the Golgi apparatus and the endoplasmic reticulum. Involved in the maintenance of the Golgi apparatus morphology. Functionally, acts as a transcriptional activator. It binds to three different types of GC-rich DNA binding sites (box-A, -B and -C) in the beta-polymerase promoter region. It also binds to the TERT promoter region. The chain is N-terminal kinase-like protein (SCYL1) from Homo sapiens (Human).